A 506-amino-acid chain; its full sequence is Maturase K (506 aa).

It belongs to the intron maturase 2 family. MatK subfamily.

Its subcellular location is the plastid. It localises to the chloroplast. In terms of biological role, usually encoded in the trnK tRNA gene intron. Probably assists in splicing its own and other chloroplast group II introns. In Empetrum nigrum (Black crowberry), this protein is Maturase K.